The following is a 452-amino-acid chain: Probable glycine dehydrogenase (decarboxylating) subunit 1 (452 aa).

It belongs to the GcvP family. N-terminal subunit subfamily. In terms of assembly, the glycine cleavage system is composed of four proteins: P, T, L and H. In this organism, the P 'protein' is a heterodimer of two subunits.

The enzyme catalyses N(6)-[(R)-lipoyl]-L-lysyl-[glycine-cleavage complex H protein] + glycine + H(+) = N(6)-[(R)-S(8)-aminomethyldihydrolipoyl]-L-lysyl-[glycine-cleavage complex H protein] + CO2. The glycine cleavage system catalyzes the degradation of glycine. The P protein binds the alpha-amino group of glycine through its pyridoxal phosphate cofactor; CO(2) is released and the remaining methylamine moiety is then transferred to the lipoamide cofactor of the H protein. The polypeptide is Probable glycine dehydrogenase (decarboxylating) subunit 1 (Novosphingobium aromaticivorans (strain ATCC 700278 / DSM 12444 / CCUG 56034 / CIP 105152 / NBRC 16084 / F199)).